Consider the following 183-residue polypeptide: Large ribosomal subunit protein uL6 (183 aa).

This sequence belongs to the universal ribosomal protein uL6 family. As to quaternary structure, part of the 50S ribosomal subunit.

Functionally, this protein binds to the 23S rRNA, and is important in its secondary structure. It is located near the subunit interface in the base of the L7/L12 stalk, and near the tRNA binding site of the peptidyltransferase center. In Chlamydia trachomatis serovar L2 (strain ATCC VR-902B / DSM 19102 / 434/Bu), this protein is Large ribosomal subunit protein uL6.